A 152-amino-acid polypeptide reads, in one-letter code: Large ribosomal subunit protein bL9 (152 aa).

This sequence belongs to the bacterial ribosomal protein bL9 family.

Its function is as follows. Binds to the 23S rRNA. In Parasynechococcus marenigrum (strain WH8102), this protein is Large ribosomal subunit protein bL9.